The primary structure comprises 393 residues: Sulfite oxidase (393 aa).

Residues methionine 1–proline 27 are disordered. Positions tyrosine 10–lysine 242 are moco domain. Residues tyrosine 49–histidine 53, cysteine 98, serine 159–aspartate 161, histidine 202, arginine 207, and serine 218–lysine 220 each bind Mo-molybdopterin. The tract at residues methionine 243–leucine 393 is homodimerization. Residues serine 391 to leucine 393 carry the Microbody targeting signal motif.

As to quaternary structure, predominantly monomer; also homodimer. Mo-molybdopterin is required as a cofactor.

It is found in the peroxisome. It carries out the reaction sulfite + O2 + H2O = sulfate + H2O2. The protein operates within energy metabolism; sulfur metabolism. In terms of biological role, probably involved in sulfite oxidative detoxification. The protein is Sulfite oxidase (SOX) of Arabidopsis thaliana (Mouse-ear cress).